Here is a 201-residue protein sequence, read N- to C-terminus: Large ribosomal subunit protein uL4 (201 aa).

The disordered stretch occupies residues 45–73 (AQKTRAEVTGSGKKPWRQKGTGRARAGSV).

This sequence belongs to the universal ribosomal protein uL4 family. As to quaternary structure, part of the 50S ribosomal subunit.

One of the primary rRNA binding proteins, this protein initially binds near the 5'-end of the 23S rRNA. It is important during the early stages of 50S assembly. It makes multiple contacts with different domains of the 23S rRNA in the assembled 50S subunit and ribosome. In terms of biological role, forms part of the polypeptide exit tunnel. This chain is Large ribosomal subunit protein uL4, found in Yersinia pseudotuberculosis serotype O:1b (strain IP 31758).